The sequence spans 132 residues: Large-conductance mechanosensitive channel (132 aa).

A run of 3 helical transmembrane segments spans residues 14 to 34, 38 to 58, and 67 to 87; these read VVDL…VSSL, IITP…LHFG, and GNFI…FMFI.

This sequence belongs to the MscL family. As to quaternary structure, homopentamer.

It localises to the cell membrane. Its function is as follows. Channel that opens in response to stretch forces in the membrane lipid bilayer. May participate in the regulation of osmotic pressure changes within the cell. This chain is Large-conductance mechanosensitive channel, found in Bacillus cereus (strain G9842).